Reading from the N-terminus, the 762-residue chain is Polyadenylate-binding protein, cytoplasmic and nuclear (762 aa).

The disordered stretch occupies residues 39–58; it reads TGEEIDTAGPTPSSAAPHPQ. Residues 48–58 are compositionally biased toward low complexity; that stretch reads PTPSSAAPHPQ. RRM domains lie at 61–139, 149–226, 242–320, and 346–470; these read ASLY…WSQR, GNVF…HHIP, TNIY…RAQK, and VNLY…LAQR. Disordered regions lie at residues 376–429, 596–663, and 740–762; these read KVMR…KSKL, SALA…AGAP, and VRQQGDGEGAQAPSKEEKTEEKA. Positions 389–425 are enriched in basic and acidic residues; the sequence is GESKEGEESEKNKENKPEEKEGDDSKPEEKEGEDSKS. The span at 600–612 shows a compositional bias: gly residues; it reads GGRGGPAGRGPMQ. Residues 645-663 are compositionally biased toward low complexity; sequence AAGRAPAGAPAGARGAGAP. A PABC domain is found at 664–741; the sequence is EGLQGQLAAV…ALAVYDDYVR (78 aa). A compositionally biased stretch (basic and acidic residues) spans 753-762; sequence SKEEKTEEKA.

The protein belongs to the polyadenylate-binding protein type-1 family.

Its subcellular location is the cytoplasm. The protein resides in the nucleus. Functionally, binds the poly(A) tail of mRNA. Appears to be an important mediator of the multiple roles of the poly(A) tail in mRNA biogenesis, stability and translation. In the nucleus, involved in both mRNA cleavage and polyadenylation. Is also required for efficient mRNA export to the cytoplasm. Acts in concert with a poly(A)-specific nuclease (PAN) to affect poly(A) tail shortening, which may occur concomitantly with either nucleocytoplasmic mRNA transport or translational initiation. In the cytoplasm, stimulates translation initiation and regulates mRNA decay through translation termination-coupled poly(A) shortening, probably mediated by PAN. The sequence is that of Polyadenylate-binding protein, cytoplasmic and nuclear (PAB1) from Pyricularia oryzae (strain 70-15 / ATCC MYA-4617 / FGSC 8958) (Rice blast fungus).